A 394-amino-acid polypeptide reads, in one-letter code: Exodeoxyribonuclease 7 large subunit (394 aa).

It belongs to the XseA family. As to quaternary structure, heterooligomer composed of large and small subunits.

It is found in the cytoplasm. The catalysed reaction is Exonucleolytic cleavage in either 5'- to 3'- or 3'- to 5'-direction to yield nucleoside 5'-phosphates.. In terms of biological role, bidirectionally degrades single-stranded DNA into large acid-insoluble oligonucleotides, which are then degraded further into small acid-soluble oligonucleotides. This Thermotoga petrophila (strain ATCC BAA-488 / DSM 13995 / JCM 10881 / RKU-1) protein is Exodeoxyribonuclease 7 large subunit.